Here is a 319-residue protein sequence, read N- to C-terminus: GTP 3',8-cyclase (319 aa).

One can recognise a Radical SAM core domain in the interval 4-219 (KHGRKINYLR…SKHSDLIPVE (216 aa)). Arg13 is a binding site for GTP. Residues Cys20 and Cys24 each coordinate [4Fe-4S] cluster. Tyr26 contacts S-adenosyl-L-methionine. Cys27 contacts [4Fe-4S] cluster. Residue Arg63 coordinates GTP. Gly67 serves as a coordination point for S-adenosyl-L-methionine. A GTP-binding site is contributed by Thr94. Ser118 is an S-adenosyl-L-methionine binding site. Lys155 lines the GTP pocket. Residue Met189 participates in S-adenosyl-L-methionine binding. Positions 249 and 252 each coordinate [4Fe-4S] cluster. Position 254 to 256 (254 to 256 (RVR)) interacts with GTP. Cys266 provides a ligand contact to [4Fe-4S] cluster.

It belongs to the radical SAM superfamily. MoaA family. In terms of assembly, monomer and homodimer. The cofactor is [4Fe-4S] cluster.

It catalyses the reaction GTP + AH2 + S-adenosyl-L-methionine = (8S)-3',8-cyclo-7,8-dihydroguanosine 5'-triphosphate + 5'-deoxyadenosine + L-methionine + A + H(+). Its pathway is cofactor biosynthesis; molybdopterin biosynthesis. Functionally, catalyzes the cyclization of GTP to (8S)-3',8-cyclo-7,8-dihydroguanosine 5'-triphosphate. This chain is GTP 3',8-cyclase, found in Clostridium botulinum (strain Okra / Type B1).